Consider the following 358-residue polypeptide: Alanine racemase (358 aa).

Lys35 acts as the Proton acceptor; specific for D-alanine in catalysis. Lys35 carries the N6-(pyridoxal phosphate)lysine modification. Arg130 provides a ligand contact to substrate. The active-site Proton acceptor; specific for L-alanine is Tyr255. A substrate-binding site is contributed by Met303.

Belongs to the alanine racemase family. It depends on pyridoxal 5'-phosphate as a cofactor.

It carries out the reaction L-alanine = D-alanine. It functions in the pathway amino-acid biosynthesis; D-alanine biosynthesis; D-alanine from L-alanine: step 1/1. Functionally, catalyzes the interconversion of L-alanine and D-alanine. May also act on other amino acids. The polypeptide is Alanine racemase (alr) (Shewanella piezotolerans (strain WP3 / JCM 13877)).